A 258-amino-acid polypeptide reads, in one-letter code: Octanoyltransferase (258 aa).

The 185-residue stretch at 42-226 (NVGTDTLLLL…AVVAALDGEL (185 aa)) folds into the BPL/LPL catalytic domain. Substrate-binding positions include 80–87 (RGGKITWH), 156–158 (AIG), and 169–171 (GFS). The Acyl-thioester intermediate role is filled by Cys187.

It belongs to the LipB family.

The protein resides in the cytoplasm. The catalysed reaction is octanoyl-[ACP] + L-lysyl-[protein] = N(6)-octanoyl-L-lysyl-[protein] + holo-[ACP] + H(+). It functions in the pathway protein modification; protein lipoylation via endogenous pathway; protein N(6)-(lipoyl)lysine from octanoyl-[acyl-carrier-protein]: step 1/2. In terms of biological role, catalyzes the transfer of endogenously produced octanoic acid from octanoyl-acyl-carrier-protein onto the lipoyl domains of lipoate-dependent enzymes. Lipoyl-ACP can also act as a substrate although octanoyl-ACP is likely to be the physiological substrate. The protein is Octanoyltransferase of Rhodococcus jostii (strain RHA1).